The primary structure comprises 206 residues: Peroxynitrite isomerase (206 aa).

The GXWXGXG motif lies at 21-27 (GTWEGNG). His-190 contributes to the heme b binding site.

It belongs to the nitrobindin family. Homodimer. Requires heme b as cofactor.

It carries out the reaction peroxynitrite = nitrate. Its pathway is nitrogen metabolism. Functionally, heme-binding protein able to scavenge peroxynitrite and to protect free L-tyrosine against peroxynitrite-mediated nitration, by acting as a peroxynitrite isomerase that converts peroxynitrite to nitrate. Therefore, this protein likely plays a role in peroxynitrite sensing and in the detoxification of reactive nitrogen and oxygen species (RNS and ROS, respectively). Is able to bind nitric oxide (NO) in vitro, but may act as a sensor of peroxynitrite levels in vivo. The polypeptide is Peroxynitrite isomerase (Kocuria rhizophila (strain ATCC 9341 / DSM 348 / NBRC 103217 / DC2201)).